The chain runs to 2474 residues: Polyprotein P1234 (2474 aa).

An Alphavirus-like MT domain is found at 28-259 (EPRQVTPNDH…ESRKLLKSWH (232 aa)). The For mRNA-capping enzyme nsP1 activity role is filled by His37. His79, Glu129, Cys134, and Cys141 together coordinate Zn(2+). Positions 295–450 (GLYGKTTGYA…QKVQAEFDSF (156 aa)) are membrane-binding and oligomerization. Residues Cys417 and Cys419 are each lipidated (S-palmitoyl cysteine; by host). A disordered region spans residues 482–502 (PYSGDAQEARDAEKEAEEERE). The (+)RNA virus helicase ATP-binding domain occupies 690 to 842 (DLTNPPYHEF…HNICTQVYHK (153 aa)). 721-728 (GVPGSGKS) is an a ribonucleoside 5'-triphosphate binding site. The (+)RNA virus helicase C-terminal domain maps to 843-991 (SISRRCTLPV…IKEWEVEHAS (149 aa)). In terms of domain architecture, Peptidase C9 spans 1004 to 1327 (DTFQNKANVC…NQLNAAFVGQ (324 aa)). The interval 1005–1024 (TFQNKANVCWAKSLVPILET) is nucleolus localization signal. The active-site For cysteine protease nsP2 activity is Cys1013. Residues 1058–1067 (TRMYGVDLDS) carry the Nuclear export signal motif. His1083 acts as the For cysteine protease nsP2 activity in catalysis. The Nuclear localization signal motif lies at 1182 to 1186 (PTKRV). The 160-residue stretch at 1334–1493 (APSYRVKRMD…KISEAIQMRT (160 aa)) folds into the Macro domain. ADP-D-ribose-binding residues include Asp1343, Asn1357, Gly1365, Gly1445, Val1446, and Tyr1447. Residues Cys1595, Cys1597, Cys1620, and Cys1638 each coordinate Zn(2+). The tract at residues 1651-1672 (RVSPREYRPSQESVQEASTTTS) is disordered. Residues 1659 to 1857 (PSQESVQEAS…TCSDTDDELR (199 aa)) are HVD. The span at 1660-1672 (SQESVQEASTTTS) shows a compositional bias: polar residues. Interaction with host CD2AP stretches follow at residues 1726–1739 (VMST…RRRR) and 1756–1767 (PMASVRFFRAEL). An interaction with host FHL1 region spans residues 1745–1793 (VTCDEREGNITPMASVRFFRAELCPVVQETAETRDTAMSLQAPPSTATE). Residues 1812-1815 (FGDF) carry the FGDF; binding to host G3BP1 motif. The interval 1820–1828 (IESLSSELL) is interaction with host CD2AP. The FGDF; binding to host G3BP1 signature appears at 1830 to 1833 (FGDF). Positions 2228 to 2343 (DTVLETDIAS…HGVVSDELMA (116 aa)) constitute a RdRp catalytic domain.

In terms of assembly, homododecamer. The enzyme forms a membrane-associated dodecameric ring with a central channel for the exchange of between the viral replication factories and the host cytoplasm. Interacts with non-structural protein 3. Interacts with RNA-directed RNA polymerase nsP4. Interacts with protease nsP2. Interacts with itself. Interacts with host STING1; this interaction results in inhibition of cGAS-STING signaling and increased levels of palmitoylation and protein stabilization of nsP1. Interacts with host TMEM45B; this interaction leads to viral replication inhibition. As to quaternary structure, interacts with mRNA-capping enzyme nsP1. Interacts (via C-terminus) with host G3BP1; this interaction inhibits the formation of host stress granules on viral mRNAs and the nsp3-G3BP1 complexes bind viral RNAs and probably orchestrate the assembly of viral replication complexes. Interacts (via C-terminus) with host G3BP2; this interaction inhibits the formation of host stress granules on viral mRNAs and the nsp3-G3BP2 complexes bind viral RNAs and probably orchestrate the assembly of viral replication complexes. Interacts (via C-terminus) with host NAP1L1. Interacts (via C-terminus) with host NAP1L4. Interacts (via C-terminus) with host DHX9; this interaction allows the recruitment of DHX9 to the plasma membrane, where it associates with viral replication complexes and may play a role in the translation-to-replication switch. Interacts (via C-terminus) with host FHL1 (via LIM domain 1); this interaction is required for viral RNA replication. Interacts (via C-terminus) with host CD2AP; this interaction plays a role in initiation of viral replication. Interacts (via C-terminus) with host SH3KBP1; this interaction plays a role in initiation of viral replication. Interacts with mRNA-capping enzyme nsP1. Interacts with protease nsP2. interacts with itself. Interacts with host TMEM45B; this interaction leads to viral replication inhibition. In terms of assembly, interacts with RNA-directed RNA polymerase nsP4. Interacts with mRNA-capping enzyme nsP1. Interacts with KPNA1/karyopherin-alpha1; this interaction probably allows the active transport of protease nsP2 into the host nucleus. Mg(2+) is required as a cofactor. The cofactor is Mn(2+). Specific enzymatic cleavages in vivo yield mature proteins. The processing of the polyprotein is temporally regulated. In early stages (1.7 hpi), P1234 is first cleaved in trans through its nsP2 protease activity, releasing P123 and nsP4, which associate to form the early replication complex. At the same time, P1234 is also cut at the nsP1/nsP2 site early in infection but with lower efficiency. After replication of the viral minus-strand RNAs (4 hpi), the polyproteins are cut at the nsP1/nsP2 and nsP2/nsP3 sites very efficiently, preventing accumulation of P123 and P1234 and allowing the formation of the late replication complex. NsP3/nsP4 site is not cleaved anymore and P34 is produced rather than nsP4. In terms of processing, specific enzymatic cleavages in vivo yield mature proteins. The processing of the polyprotein is temporally regulated. In early stages (1.7 hpi), P123 is cleaved at the nsP1/nsP2 site with low efficiency. After replication of the viral minus-strand RNAs (4 hpi), the polyproteins are cut at the nsP1/nsP2 and nsP2/nsP3 sites very efficiently, preventing accumulation of P123 and allowing the formation of the late replication complex. Post-translationally, palmitoylated by host palmitoyltransferases ZDHHC2 and ZDHHC19. Palmitoylation is increased by the interacton with host STING1. Phosphorylated by host on serines and threonines. In terms of processing, ubiquitinated; targets the protein for rapid degradation via the ubiquitin system. Nsp4 is present in extremely low quantities due to low frequency of translation through the amber stop-codon and the degradation by the ubiquitin pathway.

It is found in the host cytoplasmic vesicle membrane. It localises to the host cell membrane. Its subcellular location is the host cell projection. The protein localises to the host filopodium. The protein resides in the host nucleus. It is found in the host cytoplasm. It catalyses the reaction GTP + S-adenosyl-L-methionine = N(7)-methyl-GTP + S-adenosyl-L-homocysteine. It carries out the reaction N(7)-methyl-GTP + L-histidyl-[protein] = N(tele)-(N(7)-methylguanosine 5'-phospho)-L-histidyl-[protein] + diphosphate. The catalysed reaction is N(tele)-(N(7)-methylguanosine 5'-phospho)-L-histidyl-[protein] + a 5'-end diphospho-(purine-ribonucleoside) in mRNA + H(+) = a 5'-end (N(7)-methyl 5'-triphosphoguanosine)-(purine-ribonucleoside) in mRNA + L-histidyl-[protein]. The enzyme catalyses a 5'-end triphospho-ribonucleoside in mRNA + H2O = a 5'-end diphospho-ribonucleoside in mRNA + phosphate + H(+). It catalyses the reaction a ribonucleoside 5'-triphosphate + H2O = a ribonucleoside 5'-diphosphate + phosphate + H(+). It carries out the reaction ATP + H2O = ADP + phosphate + H(+). The catalysed reaction is RNA(n) + a ribonucleoside 5'-triphosphate = RNA(n+1) + diphosphate. The enzyme catalyses 4-O-(ADP-D-ribosyl)-L-aspartyl-[protein] + H2O = L-aspartyl-[protein] + ADP-D-ribose + H(+). It catalyses the reaction 5-O-(ADP-D-ribosyl)-L-glutamyl-[protein] + H2O = L-glutamyl-[protein] + ADP-D-ribose + H(+). It carries out the reaction RNA(n) + ATP = RNA(n)-3'-adenine ribonucleotide + diphosphate. The catalysed reaction is ADP-alpha-D-ribose 1''-phosphate + H2O = ADP-D-ribose + phosphate. Inactive precursor of the viral replicase, which is activated by cleavages carried out by the viral protease nsP2. Its function is as follows. The early replication complex formed by the polyprotein P123 and nsP4 synthesizes minus-strand RNAs. As soon P123 is cleaved into mature proteins, the plus-strand RNAs synthesis begins. In terms of biological role, cytoplasmic capping enzyme that catalyzes two virus-specific reactions: methyltransferase and guanylyltransferase. mRNA-capping is necessary since all viral RNAs are synthesized in the cytoplasm, and host capping enzymes are restricted to the nucleus. The enzymatic reaction involves a covalent link between 7-methyl-GMP and nsP1, whereas eukaryotic capping enzymes form a covalent complex only with GMP. nsP1 capping consists in the following reactions: GTP is first methylated into 7-methyl-GMP and then is covalently linked to nsP1 to form the m7GMp-nsP1 complex from which 7-methyl-GMP complex is transferred to the mRNA to create the cap structure. NsP1 is also needed for the initiation of the minus-strand RNAs synthesis. At the initiation of virus replication, mediates the assembly of the viral replication complex made of the non-structural proteins, the association of this complex with the inner face of the plasma membrane and the formation of membranous spherules that serve as replication complex factories. Forms the neck of these spherules with a central channel for mediating communication and the passage of RNA, nucleotides, and small proteins between the viral replication complex and the host cytoplasm. Palmitoylated nsP1 is remodeling host cell cytoskeleton, and induces filopodium-like structure formation at the surface of the host cell. Functionally, multifunctional protein whose N-terminus is part of the RNA polymerase complex and displays NTPase, RNA triphosphatase and helicase activities. NTPase and RNA triphosphatase are involved in viral RNA capping and helicase keeps a check on the dsRNA replication intermediates. The C-terminus harbors a protease that specifically cleaves the polyproteins and releases the mature proteins. Required for the shutoff of minus-strand RNAs synthesis. Specifically inhibits the host IFN response by promoting the nuclear export of host STAT1. Also inhibits host transcription by inducing the rapid proteasome-dependent degradation of POLR2A, a catalytic subunit of the RNAPII complex. The resulting inhibition of cellular protein synthesis serves to ensure maximal viral gene expression and to evade host immune response. Seems to be essential for minus-strand RNAs and subgenomic 26S mRNAs synthesis. Displays mono-ADP-ribosylhydrolase activity. ADP-ribosylation is a post-translational modification that controls various processes of the host cell and the virus probably needs to revert it for optimal viral replication. Binds proteins of G3BP family and sequesters them into the viral RNA replication complexes thereby inhibiting the formation of host stress granules on viral mRNAs. The nsp3-G3BP complexes bind viral RNAs and probably orchestrate the assembly of viral replication complexes, thanks to the ability of G3BP family members to self-assemble and bind DNA. Its function is as follows. RNA dependent RNA polymerase. Replicates genomic and antigenomic RNA by recognizing replications specific signals. The early replication complex formed by the polyprotein P123 and nsP4 synthesizes minus-strand RNAs. The late replication complex composed of fully processed nsP1-nsP4 is responsible for the production of genomic and subgenomic plus-strand RNAs. The polypeptide is Polyprotein P1234 (Chikungunya virus (strain S27-African prototype) (CHIKV)).